Reading from the N-terminus, the 172-residue chain is SsrA-binding protein (172 aa).

This sequence belongs to the SmpB family.

The protein localises to the cytoplasm. Required for rescue of stalled ribosomes mediated by trans-translation. Binds to transfer-messenger RNA (tmRNA), required for stable association of tmRNA with ribosomes. tmRNA and SmpB together mimic tRNA shape, replacing the anticodon stem-loop with SmpB. tmRNA is encoded by the ssrA gene; the 2 termini fold to resemble tRNA(Ala) and it encodes a 'tag peptide', a short internal open reading frame. During trans-translation Ala-aminoacylated tmRNA acts like a tRNA, entering the A-site of stalled ribosomes, displacing the stalled mRNA. The ribosome then switches to translate the ORF on the tmRNA; the nascent peptide is terminated with the 'tag peptide' encoded by the tmRNA and targeted for degradation. The ribosome is freed to recommence translation, which seems to be the essential function of trans-translation. The chain is SsrA-binding protein from Dehalococcoides mccartyi (strain ATCC BAA-2266 / KCTC 15142 / 195) (Dehalococcoides ethenogenes (strain 195)).